We begin with the raw amino-acid sequence, 188 residues long: Putative protein SSX6 (188 aa).

Disordered regions lie at residues 1–22 (MNGD…EKRS) and 74–188 (KRAT…EDDK). The 64-residue stretch at 20–83 (KRSKAFDDIA…KRATDSQRND (64 aa)) folds into the KRAB-related domain. 2 stretches are compositionally biased toward basic and acidic residues: residues 75 to 96 (RATD…EVER) and 112 to 122 (MPEKPAEEGSD). Phosphoserine is present on serine 123. A compositionally biased stretch (basic and acidic residues) spans 147–156 (SSEKIHERSG). Residues 157–170 (PKRGKHAWTHRLRE) show a composition bias toward basic residues. Residues 179 to 188 (EISDPEEDDK) show a composition bias toward acidic residues.

This sequence belongs to the SSX family. As to expression, not detected in any normal tissues. Expressed in a melanoma cell line.

Functionally, could act as a modulator of transcription. This is Putative protein SSX6 from Homo sapiens (Human).